A 133-amino-acid polypeptide reads, in one-letter code: Ubiquitin-like FUBI-ribosomal protein eS30 fusion protein (133 aa).

One can recognise a Ubiquitin-like domain in the interval 1–74 (MQLFVRAQEL…LEVAGRMLGG (74 aa)). At lysine 125 the chain carries N6-succinyllysine.

It in the N-terminal section; belongs to the ubiquitin family. This sequence in the C-terminal section; belongs to the eukaryotic ribosomal protein eS30 family. In terms of assembly, component of the 40S subunit of the ribosome. In terms of processing, FUBI is cleaved from ribosomal protein S30 by the deubiquitinase USP36 before the assembly of ribosomal protein S30 into pre-40S ribosomal particles. FUBI removal from ribosomal protein S30 is a crucial event for the final maturation of pre-40S particles.

Its subcellular location is the cytoplasm. It is found in the nucleus. In terms of biological role, may have pro-apoptotic activity. Functionally, component of the 40S subunit of the ribosome. Contributes to the assembly and function of 40S ribosomal subunits. The sequence is that of Ubiquitin-like FUBI-ribosomal protein eS30 fusion protein (FAU) from Oryctolagus cuniculus (Rabbit).